A 197-amino-acid polypeptide reads, in one-letter code: RIP-like protein (197 aa).

The interval 1 to 20 (MNSTQSPVYRTSVEQKRHAQ) is disordered. The RIP-type zinc-finger motif lies at 122 to 191 (CPVCQIKNLR…GQLYDMCGSC (70 aa)).

The protein is RIP-like protein (Ripalpha) of Drosophila melanogaster (Fruit fly).